The chain runs to 580 residues: DNA ligase 1 (580 aa).

Residue Glu245 coordinates ATP. Residue Lys247 is the N6-AMP-lysine intermediate of the active site. 6 residues coordinate ATP: Arg252, Arg267, Glu297, Phe343, Arg420, and Lys426.

Belongs to the ATP-dependent DNA ligase family. It depends on Mg(2+) as a cofactor.

It catalyses the reaction ATP + (deoxyribonucleotide)n-3'-hydroxyl + 5'-phospho-(deoxyribonucleotide)m = (deoxyribonucleotide)n+m + AMP + diphosphate.. In terms of biological role, DNA ligase that seals nicks in double-stranded DNA during DNA replication, DNA recombination and DNA repair. This chain is DNA ligase 1, found in Methanosarcina acetivorans (strain ATCC 35395 / DSM 2834 / JCM 12185 / C2A).